A 509-amino-acid chain; its full sequence is Tyrosine-protein phosphatase non-receptor type substrate 1 (509 aa).

The N-terminal stretch at 1–31 (MEPAGPAPGRLGPLLFCLLLSASCFCAGASG) is a signal peptide. Residues 32–138 (KELKVTQADK…IVEPDTEIKS (107 aa)) enclose the Ig-like V-type domain. The Extracellular segment spans residues 32–373 (KELKVTQADK…PDNNAYYNWN (342 aa)). N-linked (GlcNAc...) asparagine glycans are attached at residues Asn54, Asn93, Asn169, Asn181, Asn205, Asn209, Asn242, Asn246, Asn271, Asn293, Asn312, Asn320, and Asn345. Cys55 and Cys122 form a disulfide bridge. Ig-like C1-type domains follow at residues 150-248 (PSSP…ANFS) and 255-349 (PTLK…HTVR). The cysteines at positions 172 and 229 are disulfide-linked. The cysteines at positions 274 and 332 are disulfide-linked. Residues 374 to 394 (VFIGVGVACALLVVLLMAALY) traverse the membrane as a helical segment. The Cytoplasmic portion of the chain corresponds to 395 to 509 (LLRIKQKKAK…EYASVQVQRK (115 aa)). Tyr436 is subject to Phosphotyrosine; by Tyr-kinases. The SH2-binding motif lies at 436–439 (YADL). Residues 441-472 (LPKEKKPAPRVPEPNNHTEYASIETGKLPRPE) form a disordered region. The short motif at 446–451 (KPAPRV) is the SH3-binding element. Phosphotyrosine; by Tyr-kinases is present on residues Tyr460, Tyr477, and Tyr501. Short sequence motifs (SH2-binding) lie at residues 460-463 (YASI), 477-480 (YADL), and 501-504 (YASV). The interval 485 to 509 (LNRAQPTPKPEPSFSEYASVQVQRK) is disordered. The segment covering 500 to 509 (EYASVQVQRK) has biased composition (polar residues).

As to quaternary structure, binds PTPN11 when tyrosine-phosphorylated, except in macrophages, where it primarily binds PTPN6. Binds GRB2 in vitro. Binds FGR. Binds JAK2 irrespective of its phosphorylation status and forms a stable complex. Binds SCAP1 and/or SCAP2. The resulting complex recruits FYB1. Binds PTK2B. Interacts with TRIM2. Post-translationally, N-glycosylated. In terms of processing, phosphorylated on tyrosine residues in response to insulin, cell adhesion or epidermal growth factors. Dephosphorylated by PTPN11. Highly expressed in brain, spleen, lung, liver and kidney. Detected at lower levels in heart. Highly expressed in alveolar and peritoneal macrophages, and at lower levels in dendritic cells.

Its subcellular location is the membrane. In terms of biological role, immunoglobulin-like cell surface receptor for CD47. Acts as docking protein and induces translocation of PTPN6, PTPN11 and other binding partners from the cytosol to the plasma membrane. Supports adhesion of cerebellar neurons, neurite outgrowth and glial cell attachment. May play a key role in intracellular signaling during synaptogenesis and in synaptic function. Involved in the negative regulation of receptor tyrosine kinase-coupled cellular responses induced by cell adhesion, growth factors or insulin. Mediates negative regulation of phagocytosis, mast cell activation and dendritic cell activation. CD47 binding prevents maturation of immature dendritic cells and inhibits cytokine production by mature dendritic cells. Plays a role in antiviral immunity and limits new world arenavirus infection by decreasing virus internalization. Receptor for THBS1. Interaction with THBS1 stimulates phosphorylation of SIRPA. In response to THBS1, involved in ROS signaling in non-phagocytic cells, stimulating NADPH oxidase-derived ROS production. The chain is Tyrosine-protein phosphatase non-receptor type substrate 1 (Sirpa) from Rattus norvegicus (Rat).